The following is a 444-amino-acid chain: Nuclear envelope integral membrane protein 1 (444 aa).

An N-terminal signal peptide occupies residues 1-43 (MAGGMKVAVSPAVGPGPWGSGVGGGGTVRLLLILSGCLVYGTA). N-linked (GlcNAc...) asparagine glycosylation is present at asparagine 125. 5 helical membrane passes run 161–181 (PKLFLVFLLGLMLFFCGDLLS), 186–206 (FYYSTGMSVGIVASLLIIIFI), 216–236 (PIYVILVGGWSFSLYLIQLVF), 245–265 (CYWQYLLSYILTVGFMSFAVC), and 289–309 (LCFMYSGIQIPHIALAIIIIA). The segment at 186–297 (FYYSTGMSVG…GLCFMYSGIQ (112 aa)) is a; required for its colocalization with lamins at the nuclear envelope. Residues 336–405 (PVPPRLLTEE…LTPNEVSVHE (70 aa)) form a b; required for interaction with RAN-GTP region. The segment at 336–444 (PVPPRLLTEE…PAITQNNFLT (109 aa)) is required for nuclear localization. Phosphoserine occurs at positions 368, 424, and 425.

It belongs to the NEMP family. As to quaternary structure, homooligomer. Interacts with RAN-GTP. Interacts with EMD. Phosphorylation may regulate its interaction with RAN-GTP.

It localises to the nucleus inner membrane. It is found in the nucleus envelope. Together with EMD, contributes to nuclear envelope stiffness in germ cells. Required for female fertility. Essential for normal erythropoiesis. Required for efficient nuclear envelope opening and enucleation during the late stages of erythroblast maturation. This is Nuclear envelope integral membrane protein 1 (NEMP1) from Pongo abelii (Sumatran orangutan).